The primary structure comprises 365 residues: Protein AC54 (365 aa).

In terms of assembly, interacts with C42 and VP80. Interacts with protein 38K.

The protein localises to the virion. Functionally, structural protein that participates in nucleocapsid assembly. Plays an essential role in the proper localization of the major capsid protein VP39, and the minor capsid protein 38K into the capsid assembly site. This chain is Protein AC54 (AC54), found in Lepidoptera (butterflies and moths).